Consider the following 678-residue polypeptide: Sulfoquinovosidase (678 aa).

A 6-sulfo-alpha-D-quinovosyldiacylglycerol-binding residues include Gln-288, Arg-301, Val-302, and Trp-304. Asp-405 (nucleophile) is an active-site residue. The active site involves Glu-408. Asp-472 acts as the Proton donor in catalysis. A 6-sulfo-alpha-D-quinovosyldiacylglycerol is bound at residue His-537.

This sequence belongs to the glycosyl hydrolase 31 family.

It carries out the reaction a 6-sulfo-alpha-D-quinovosyldiacylglycerol + H2O = 6-sulfo-alpha-D-quinovose + a 1,2-diacyl-sn-glycerol. It catalyses the reaction 3-(6-sulfo-alpha-D-quinovosyl)glycerol + H2O = 6-sulfo-alpha-D-quinovose + glycerol. It participates in glycolipid metabolism. Its activity is regulated as follows. Is inactivated in vitro by the mechanism-based inactivator 5-fluoro-beta-L-idopyranosyl fluoride (5FIdoF) that yields a covalent glycosyl-enzyme complex with the active site nucleophile Asp-405. In terms of biological role, catalyzes the hydrolysis of sulfoquinovosyl diacylglycerides (SQDG) to sulfoquinovose (SQ), which is then degraded by E.coli through the SQ Embden-Meyerhof-Parnas (SQ-EMP) sulfoglycolysis pathway as a source of carbon and sulfur. Therefore, is likely involved in the utilization of the sulfoquinovose headgroup found in ubiquitous plant sulfolipids. Is also able to hydrolyze simple sulfoquinovosides such as sulfoquinovosyl glycerol (SQGro). In vitro, can use the substrate analog para-nitrophenyl alpha-sulfoquinovoside (PNPSQ), but shows no detectable activity toward 4-nitrophenyl alpha-D-glucopyranoside (PNPGlc). Is a retaining glycoside hydrolase, since it forms the alpha anomer of SQ. Also exhibits some alpha-glucosidase activity against alpha-glucosyl fluoride in vitro, although natural substrates, such as alpha-glucobioses are scarcely hydrolyzed. The chain is Sulfoquinovosidase from Escherichia coli (strain K12).